A 565-amino-acid polypeptide reads, in one-letter code: Thiol:disulfide interchange protein DsbD (565 aa).

The N-terminal stretch at 1–19 is a signal peptide; sequence MAQRIFTLILLLCSTSVFA. Residues 20-162 are Periplasmic-facing; sequence GLFDAPGRSQ…VPQQEQPTAQ (143 aa). Disulfide bonds link Cys-122–Cys-128 and Cys-182–Cys-304. Residues 163-183 traverse the membrane as a helical segment; the sequence is LPFSALWALLIGIGIAFTPCV. Topologically, residues 184-207 are cytoplasmic; the sequence is LPMYPLISGIVLGGKQRLSTARAL. Residues 208 to 228 traverse the membrane as a helical segment; sequence LLTFIYVQGMALTYTALGLVV. At 229-242 the chain is on the periplasmic side; sequence AAAGLQFQAALQHP. A helical transmembrane segment spans residues 243–263; sequence YVLIGLTIVFTLLAMSMFGLL. The Cytoplasmic portion of the chain corresponds to 264 to 295; the sequence is TLQLPSSLQTRLTLMSNRQQGGSPGGVFIMGT. Residues 296-316 traverse the membrane as a helical segment; the sequence is IAGLICSPCTTAPLSAILLYI. Residues 317 to 322 are Periplasmic-facing; it reads AQSGNM. A helical transmembrane segment spans residues 323 to 343; that stretch reads WLGGGTLYLYALGMGLPLMLI. Residues 344–356 lie on the Cytoplasmic side of the membrane; the sequence is TVFGNRLLPKSGP. A helical transmembrane segment spans residues 357-377; that stretch reads WMEQVKTAFGFVILALPVFLL. Topologically, residues 378 to 383 are periplasmic; the sequence is ERVIGD. A helical transmembrane segment spans residues 384 to 404; the sequence is VWGLRLWSALGVAFFGWAFIT. Over 405-417 the chain is Cytoplasmic; sequence SLQAKRGWMRVVQ. A helical membrane pass occupies residues 418 to 438; the sequence is IILLAAALVSVRPLQDWAFGA. The 132-residue stretch at 434–565 folds into the Thioredoxin domain; it reads WAFGATHTAQ…FSAHLRDRQP (132 aa). Topologically, residues 439–565 are periplasmic; sequence THTAQTQTHL…FSAHLRDRQP (127 aa). The cysteines at positions 480 and 483 are disulfide-linked.

Belongs to the thioredoxin family. DsbD subfamily.

The protein resides in the cell inner membrane. The catalysed reaction is [protein]-dithiol + NAD(+) = [protein]-disulfide + NADH + H(+). It carries out the reaction [protein]-dithiol + NADP(+) = [protein]-disulfide + NADPH + H(+). Functionally, required to facilitate the formation of correct disulfide bonds in some periplasmic proteins and for the assembly of the periplasmic c-type cytochromes. Acts by transferring electrons from cytoplasmic thioredoxin to the periplasm. This transfer involves a cascade of disulfide bond formation and reduction steps. This is Thiol:disulfide interchange protein DsbD from Escherichia coli O157:H7.